Reading from the N-terminus, the 427-residue chain is Serine hydroxymethyltransferase (427 aa).

Residues Leu122 and 126–128 (GHL) contribute to the (6S)-5,6,7,8-tetrahydrofolate site. Residue Lys231 is modified to N6-(pyridoxal phosphate)lysine. (6S)-5,6,7,8-tetrahydrofolate is bound by residues Glu247 and 355–357 (SPF).

Belongs to the SHMT family. Homodimer. The cofactor is pyridoxal 5'-phosphate.

The protein resides in the cytoplasm. It catalyses the reaction (6R)-5,10-methylene-5,6,7,8-tetrahydrofolate + glycine + H2O = (6S)-5,6,7,8-tetrahydrofolate + L-serine. It functions in the pathway one-carbon metabolism; tetrahydrofolate interconversion. The protein operates within amino-acid biosynthesis; glycine biosynthesis; glycine from L-serine: step 1/1. In terms of biological role, catalyzes the reversible interconversion of serine and glycine with tetrahydrofolate (THF) serving as the one-carbon carrier. This reaction serves as the major source of one-carbon groups required for the biosynthesis of purines, thymidylate, methionine, and other important biomolecules. Also exhibits THF-independent aldolase activity toward beta-hydroxyamino acids, producing glycine and aldehydes, via a retro-aldol mechanism. This is Serine hydroxymethyltransferase from Synechocystis sp. (strain ATCC 27184 / PCC 6803 / Kazusa).